The chain runs to 360 residues: Alpha-2-HS-glycoprotein (360 aa).

The first 15 residues, 1 to 15, serve as a signal peptide directing secretion; that stretch reads LVLLLSLAQLWSCHL. The Cystatin fetuin-A-type 1 domain maps to 24-130; that stretch reads YREHNCDDPE…QFTVLSAKCD (107 aa). Disulfide bonds link Cys29-Cys351, Cys86-Cys97, Cys111-Cys129, Cys143-Cys146, Cys205-Cys216, and Cys227-Cys244. Asn96 carries N-linked (GlcNAc...) asparagine glycosylation. Phosphoserine is present on Ser131. Thr132 carries the phosphothreonine modification. Phosphoserine is present on Ser135. The 112-residue stretch at 141 to 252 folds into the Cystatin fetuin-A-type 2 domain; that stretch reads KLCPDCPLLT…TCTIFPAQPV (112 aa). N-linked (GlcNAc...) asparagine glycosylation is present at Asn153. The interval 260–285 is disordered; sequence VAGAAAVEPAPAVDPASPVSPPDGQS. Thr312 carries the post-translational modification Phosphothreonine. Ser318, Ser321, and Ser323 each carry phosphoserine.

The protein belongs to the fetuin family. Post-translationally, phosphorylated by FAM20C in the extracellular medium. Bone marrow.

It is found in the secreted. In terms of biological role, a cell adhesion protein that binds immature cells of the granulocyte lineage. This chain is Alpha-2-HS-glycoprotein (AHSG), found in Oryctolagus cuniculus (Rabbit).